A 429-amino-acid polypeptide reads, in one-letter code: Glutamate-1-semialdehyde 2,1-aminomutase 2 (429 aa).

At Lys-268 the chain carries N6-(pyridoxal phosphate)lysine.

Belongs to the class-III pyridoxal-phosphate-dependent aminotransferase family. HemL subfamily. In terms of assembly, homodimer. It depends on pyridoxal 5'-phosphate as a cofactor.

It localises to the cytoplasm. The enzyme catalyses (S)-4-amino-5-oxopentanoate = 5-aminolevulinate. Its pathway is porphyrin-containing compound metabolism; protoporphyrin-IX biosynthesis; 5-aminolevulinate from L-glutamyl-tRNA(Glu): step 2/2. This is Glutamate-1-semialdehyde 2,1-aminomutase 2 from Bacillus cereus (strain AH820).